Reading from the N-terminus, the 317-residue chain is Melanocyte-stimulating hormone receptor (317 aa).

Residues 1–37 (MPVQGSQRRLLGSLNSTPTATPRLGLAANQTGARCLE) are Extracellular-facing. An N-linked (GlcNAc...) asparagine glycan is attached at asparagine 29. Residues 38-63 (VSIPDGLFLSLGLVSLVENVLVVVAI) form a helical membrane-spanning segment. Residues 64 to 72 (ARNRNLHSP) lie on the Cytoplasmic side of the membrane. Residues 73–93 (MYCFICCLALSDLLVSGSNML) form a helical membrane-spanning segment. Topologically, residues 94–118 (ETAVFLLLEAGALAARAAVVQQLDN) are extracellular. The helical transmembrane segment at 119-140 (VIDVITCSSMLSSLCFLGAIAV) threads the bilayer. Over 141-163 (DRYISIFYALRYHSIVTLRRARR) the chain is Cytoplasmic. A helical transmembrane segment spans residues 164–183 (VVAAIWVASVLFSTLFIAYC). Residues 184 to 191 (DHAAVLLC) are Extracellular-facing. Residues 192-211 (LVVFFLAMLVLMAVLYVHML) traverse the membrane as a helical segment. The Cytoplasmic portion of the chain corresponds to 212–240 (ARACQHAQGIAQLHKRQRPAHQGVGLKGA). A helical transmembrane segment spans residues 241–266 (ATLTILLGIFFLCWGPFFLHLTLIVL). Over 267–279 (CPQHPTCSCIFKN) the chain is Extracellular. A helical transmembrane segment spans residues 280–300 (FNLFLTLIICNAIIDPLIYAF). The Cytoplasmic portion of the chain corresponds to 301–317 (RSQELRRTLKKVLLCSW). Cysteine 315 carries S-palmitoyl cysteine lipidation.

It belongs to the G-protein coupled receptor 1 family. Interacts with MGRN1, but does not undergo MGRN1-mediated ubiquitination; this interaction competes with GNAS-binding and thus inhibits agonist-induced cAMP production. Interacts with OPN3; the interaction results in a decrease in MC1R-mediated cAMP signaling and ultimately a decrease in melanin production in melanocytes.

It is found in the cell membrane. In terms of biological role, receptor for MSH (alpha, beta and gamma) and ACTH. The activity of this receptor is mediated by G proteins which activate adenylate cyclase. Mediates melanogenesis, the production of eumelanin (black/brown) and phaeomelanin (red/yellow), via regulation of cAMP signaling in melanocytes. This chain is Melanocyte-stimulating hormone receptor (MC1R), found in Trachypithecus obscurus (Dusky leaf-monkey).